We begin with the raw amino-acid sequence, 2170 residues long: MEEILRKLQRDASGSKYKAIKESCTWALETLGGLDTVVKIPPHLLREKCLLPLQLALESKNVKLAQHALAGMQKLLSEERFVSMETDSDEKQLLNQILNAVKVTPSLNEDLQVEVMKVLLCITYTPTFDMNGSAVLKIAEVCIETYTCSCHQRSINTAVRATLSQMLGDLTLQLRQRQENTIIENPDAPQEFRSQGLTVEALCDDVISVLAVLCEKLQASINDSQQLQLLYLECILSVLSSSSSSMHLHRGFTDLIWKSLCPALVVILGNPIHDKTITSAHSTSTSTSMESDSASLGVSDHGRGSGCSCTAPTLSGPVARTIYYLAAELVRLVGSVDSMKPVLQSLYHRVLLYPPPQHRVEAIKIMKEILGSPQRLYDLAGPSSIESEPRKRSISKRKSHLDLLKLIMDGMTEACIKGGIEACYAAVSCVCTLLGALDELSQGKGLNDTQVQQLLLRLEELRDGAESSRDSMEINEADFRWQRRVLSSEHTPWESGNERSPDISISVTTDTGQTTLEGELGQTTPEDHKNGLKSPAIQEGKGTMGKVSEPEAIDQPDVVQRSHTVPYPDITNFLSVDCRTRSYGSRYSESNFSVDDQDLSRTEFDSCDQYSMAAEKDSGRSDVSDIGSDNCSLADEEQTPRDYIGHRSLRTAALSLKLLKNQEADQHSARLFIQSLEGLLPRLLALSSVEEVDSALQNFASTFCSGMMHSPGFDGGSSLSFQMLMNADSLYTAAHCALLLNLKLSHGDYYRKRPTVAPGMMKEFMKQVQTSGVLMVFSQAWLEELYHQVLDRNMLGEAGYWGSPEDNSLPLITMLTDIDGLESSAIGGQLMASASVESPFTQSRRLDDSTVAGVAFARYILVGCWKNLIDTLSTPLTGRMAGSSKGLAFILGAEGIKEQNQKERDAICMSLDGLRKAARLSCALGVAANCASALAQMAAASCVQEEKEERQSQEPSDALAQVKLKVEQKLEQMGKVQGVWLHTAHVLCMDAILSVGLEMGSHNPDCWPHVFRVCEYVGTLEHTHFSDGISQPPLTIHQPQKTSGSSGLLGEIEFKSSSQEQSLEQGPSLNTAPVVQPHSIQELVRECSRGRTSDFRGGSLSGNSAAKVVLSLSTQADRLFDDATDKLNLTALGGFLYQLKKASQSQLFHSVTDTVDYSLTMPGEVKSTQDQKSALHLFRLGDAMLRIVRSKARPLLHVMRCWSLVAPHLVEAACHKERHVSQKAVSFIHDILTEVLTDWSEPPHFHFNEALFRPFERIMQLELCDEDVQDQVVTSIGELVEVCSAQIQSGWRPLFSALETVRSGNKSEVKEYLVGDYSMGKGQAPVFDVFEAFLNTDNIQVFANAATSYIMCLMKFVKGLGEVDCKEIGDCVPGAGATSTDLCLPALDYLRRCSQLLAKIYKMPLKPIFLSGRLASLPRRLQEQSASSEDGIESVLSDFDDDTGLIEVWIILLEQLTAAVSNCPRQHQPPTLDLLFELLRDVTKTPGPGFGIYAVVHLLLPVMSLWLLRSHKDHSYWDVASANFKHAIGLSCELVVEHIQSFLHSDIRYESMINTMLKDLFELLVVCVAKPTETISRVGCSCIRYVLVTAGPVFTEEMWRLACCALQDAFSATLKPVKDLLGCFHGGTEGFSGEGCQVRVAAPSSSPSAEAEYWRIRAMAQQVFMLDTQCSPKTPNNFDHAQSCQLIIELPHDEKPNGHAKKSVSFREIVVSLLSHQVLLQNLYDILLEEFVKGPSPGEEKTVQVPDTKLAGFLRYISMQNLAVIFDLLLDSYRTAREFDTSPGLKCLLKKVSGIGGAANLYRQSAMSFNIYFHALVCAVLTNQETITAEQVKKVLFEEEERSSDSSQQCSSEDEDIFEETAQVSPPRGKEKRQWRARLPSLSVQPVSNADWVWLVKRLHKLCMELCNHYIQMHLDLESSLEEPLTFKSDPFFILPSFQSESSTPSTGGFSGKNTPSEDDRREHLSEPQSLRVGSGDMLMLPPSPKTEKKDPGRKKEWWESAGNKICTMAADKTISKLMTEYKKRRQPHNLPPFPKEVKVDKKGEPLGPRGPDSPLLQRPQHLIDQGQMRHSFSAGPELLRQEKRPRSGSTGSSLSVSVRDAEAQIQAWTNMVLTVLNQIQILPDQTFTALQPAVFPCISQLTCHVTDIRVRQAVREWLGRVGRVYDIIT.

Ser-471 bears the Phosphoserine mark. Disordered regions lie at residues 489 to 547 and 613 to 634; these read EHTP…MGKV and AAEK…CSLA. Residues 503–524 show a composition bias toward polar residues; the sequence is ISISVTTDTGQTTLEGELGQTT. Residues 579 to 792 enclose the SEC7 domain; it reads RTRSYGSRYS…EELYHQVLDR (214 aa). Positions 614-623 are enriched in basic and acidic residues; it reads AEKDSGRSDV. 3 positions are modified to phosphoserine: Ser-628, Ser-632, and Ser-1045. The chain crosses the membrane as a helical span at residues 1488–1508; it reads PGFGIYAVVHLLLPVMSLWLL. Positions 1843 to 1872 are disordered; the sequence is SSDSSQQCSSEDEDIFEETAQVSPPRGKEK. Ser-1881 carries the phosphoserine modification. The segment covering 1938–1955 has biased composition (polar residues); sequence FQSESSTPSTGGFSGKNT. 2 disordered regions span residues 1938-1997 and 2024-2058; these read FQSE…RKKE and KRRQ…PLLQ. Basic and acidic residues predominate over residues 1956-1966; sequence PSEDDRREHLS. A phosphoserine mark is found at Ser-1975 and Ser-1984. Composition is skewed to basic and acidic residues over residues 1986–1997 and 2036–2045; these read KTEKKDPGRKKE and KEVKVDKKGE. Phosphoserine occurs at positions 2072, 2074, 2088, 2094, and 2096. The disordered stretch occupies residues 2078–2097; sequence ELLRQEKRPRSGSTGSSLSV. Over residues 2088–2097 the composition is skewed to low complexity; it reads SGSTGSSLSV.

Interacts with PHB2. As to expression, expressed in pancreatic islet (insulin granules of islet alpha and beta cells) and brain (at protein level).

Its subcellular location is the cytoplasmic vesicle. The protein resides in the secretory vesicle. It localises to the secretory vesicle membrane. Its function is as follows. Participates in the regulation of systemic glucose homeostasis, where it negatively regulates insulin granule biogenesis in pancreatic islet beta cells. Also regulates glucagon granule production in pancreatic alpha cells. Inhibits nuclear translocation of the transcriptional coregulator PHB2 and may enhance estrogen receptor alpha (ESR1) transcriptional activity in breast cancer cells. In Mus musculus (Mouse), this protein is Brefeldin A-inhibited guanine nucleotide-exchange protein 3.